A 125-amino-acid polypeptide reads, in one-letter code: Small ribosomal subunit protein uS12 (125 aa).

The disordered stretch occupies residues 1 to 31 (MPTINQLVRQGREVETTKSKSPAMQNSPQRR). Over residues 19–29 (SKSPAMQNSPQ) the composition is skewed to polar residues. At D89 the chain carries 3-methylthioaspartic acid.

Belongs to the universal ribosomal protein uS12 family. Part of the 30S ribosomal subunit. Contacts proteins S8 and S17. May interact with IF1 in the 30S initiation complex.

In terms of biological role, with S4 and S5 plays an important role in translational accuracy. Functionally, interacts with and stabilizes bases of the 16S rRNA that are involved in tRNA selection in the A site and with the mRNA backbone. Located at the interface of the 30S and 50S subunits, it traverses the body of the 30S subunit contacting proteins on the other side and probably holding the rRNA structure together. The combined cluster of proteins S8, S12 and S17 appears to hold together the shoulder and platform of the 30S subunit. The sequence is that of Small ribosomal subunit protein uS12 from Paracidovorax citrulli (strain AAC00-1) (Acidovorax citrulli).